We begin with the raw amino-acid sequence, 435 residues long: Probable tRNA pseudouridine synthase D (435 aa).

The Nucleophile role is filled by D95. The TRUD domain maps to 170 to 396 (GVPNYFGTQR…SSGTRRAVLV (227 aa)).

It belongs to the pseudouridine synthase TruD family.

The catalysed reaction is uridine(13) in tRNA = pseudouridine(13) in tRNA. Its function is as follows. Could be responsible for synthesis of pseudouridine from uracil-13 in transfer RNAs. The sequence is that of Probable tRNA pseudouridine synthase D from Natronomonas pharaonis (strain ATCC 35678 / DSM 2160 / CIP 103997 / JCM 8858 / NBRC 14720 / NCIMB 2260 / Gabara) (Halobacterium pharaonis).